The chain runs to 624 residues: tRNA uridine 5-carboxymethylaminomethyl modification enzyme MnmG (624 aa).

FAD is bound by residues 16-21 (GAGHAG), Val128, and Ser183. 275–289 (GPRYCPSIEDKVVRF) is a binding site for NAD(+). Gln372 contacts FAD.

Belongs to the MnmG family. In terms of assembly, homodimer. Heterotetramer of two MnmE and two MnmG subunits. FAD serves as cofactor.

Its subcellular location is the cytoplasm. In terms of biological role, NAD-binding protein involved in the addition of a carboxymethylaminomethyl (cmnm) group at the wobble position (U34) of certain tRNAs, forming tRNA-cmnm(5)s(2)U34. In Geobacter metallireducens (strain ATCC 53774 / DSM 7210 / GS-15), this protein is tRNA uridine 5-carboxymethylaminomethyl modification enzyme MnmG.